The primary structure comprises 743 residues: DEAD-box ATP-dependent RNA helicase 3B, chloroplastic (743 aa).

Residues 1 to 37 (MASLTLPALALALSNPGAVRLRAAAFRCWALRRRGWA) constitute a chloroplast transit peptide. A disordered region spans residues 60–79 (GSDDEDGEGPYGSDADEGFE). A compositionally biased stretch (acidic residues) spans 61-79 (SDDEDGEGPYGSDADEGFE). The Q motif signature appears at 88 to 116 (LAIARLGLPDELVATLEKRGITHLFPIQR). Residues 119 to 295 (LIPALEGRDL…RRYLNNPLTI (177 aa)) form the Helicase ATP-binding domain. Residue 132 to 139 (AKTGTGKT) coordinates ATP. The DEAD box motif lies at 243-246 (DEAD). In terms of domain architecture, Helicase C-terminal spans 324–469 (VLSDLITVYA…ISPPSIEEVL (146 aa)). A disordered region spans residues 606 to 719 (LTKISKLPAL…RSSSFGGRES (114 aa)). Over residues 642–653 (GGGASRGRGGWD) the composition is skewed to gly residues. Residues 657-671 (EDRFRRGGRSLRSDN) show a composition bias toward basic and acidic residues. Low complexity predominate over residues 688–719 (RSSSFGSRSSSYSSRGSPSFGGRSSSFGGRES). The CCHC-type zinc finger occupies 725–742 (GACFNCGESGHRATDCPN).

It belongs to the DEAD box helicase family. DDX21/DDX50 subfamily.

It localises to the plastid. The protein localises to the chloroplast stroma. The catalysed reaction is ATP + H2O = ADP + phosphate + H(+). In terms of biological role, nuclear genome-encoded factor involved in ribosome biogenesis in chloroplasts. Binds specific group II introns in chloroplasts and facilitates their splicing. Is required for rRNA maturation in plastids and may contribute to the assembly of the large (50S) ribosomal subunit. Required for normal development of chloroplasts. The protein is DEAD-box ATP-dependent RNA helicase 3B, chloroplastic of Zea mays (Maize).